A 261-amino-acid polypeptide reads, in one-letter code: Large ribosomal subunit protein uL3 (261 aa).

Residues 138 to 148 are compositionally biased toward low complexity; that stretch reads SVSHRSHGSTG. 2 disordered regions span residues 138–163 and 214–261; these read SVSH…KKMA and ADAP…GDQA. Glutamine 151 bears the N5-methylglutamine mark. Residues 227 to 261 show a composition bias toward low complexity; sequence APTPVEAAADEAAPAEEPAVTEAPAAEATEAGDQA.

The protein belongs to the universal ribosomal protein uL3 family. In terms of assembly, part of the 50S ribosomal subunit. Forms a cluster with proteins L14 and L19. Methylated by PrmB.

In terms of biological role, one of the primary rRNA binding proteins, it binds directly near the 3'-end of the 23S rRNA, where it nucleates assembly of the 50S subunit. The chain is Large ribosomal subunit protein uL3 from Phenylobacterium zucineum (strain HLK1).